We begin with the raw amino-acid sequence, 93 residues long: UPF0175 protein AF_0100 (93 aa).

This sequence belongs to the UPF0175 family.

The sequence is that of UPF0175 protein AF_0100 from Archaeoglobus fulgidus (strain ATCC 49558 / DSM 4304 / JCM 9628 / NBRC 100126 / VC-16).